The following is a 227-amino-acid chain: Cytidylate kinase (227 aa).

An ATP-binding site is contributed by 12-20; sequence GPSGAGKGT.

Belongs to the cytidylate kinase family. Type 1 subfamily.

The protein localises to the cytoplasm. The catalysed reaction is CMP + ATP = CDP + ADP. It catalyses the reaction dCMP + ATP = dCDP + ADP. This is Cytidylate kinase from Xanthomonas oryzae pv. oryzae (strain PXO99A).